The sequence spans 421 residues: UDP-N-acetylglucosamine 1-carboxyvinyltransferase (421 aa).

22–23 is a binding site for phosphoenolpyruvate; it reads KN. Arginine 92 is a binding site for UDP-N-acetyl-alpha-D-glucosamine. The active-site Proton donor is the cysteine 116. The residue at position 116 (cysteine 116) is a 2-(S-cysteinyl)pyruvic acid O-phosphothioketal. Residues aspartate 307 and valine 329 each coordinate UDP-N-acetyl-alpha-D-glucosamine.

It belongs to the EPSP synthase family. MurA subfamily.

It localises to the cytoplasm. The enzyme catalyses phosphoenolpyruvate + UDP-N-acetyl-alpha-D-glucosamine = UDP-N-acetyl-3-O-(1-carboxyvinyl)-alpha-D-glucosamine + phosphate. It functions in the pathway cell wall biogenesis; peptidoglycan biosynthesis. In terms of biological role, cell wall formation. Adds enolpyruvyl to UDP-N-acetylglucosamine. The chain is UDP-N-acetylglucosamine 1-carboxyvinyltransferase from Kosmotoga olearia (strain ATCC BAA-1733 / DSM 21960 / TBF 19.5.1).